A 575-amino-acid chain; its full sequence is Transcription factor COE2 (575 aa).

Positions 62–65 (RKSN) are interaction with DNA. The segment at 150–169 (CRVLLTHEVMCSRCCEKKSC) adopts a C5-type zinc-finger fold. 2 interaction with DNA regions span residues 196–203 (NCLKTAGN) and 235–238 (NNSK). In terms of domain architecture, IPT/TIG spans 253–336 (PCIKAISPSE…KGAPGRFIYT (84 aa)). Over residues 441 to 453 (STQGNNQGYIRNT) the composition is skewed to polar residues. Residues 441–479 (STQGNNQGYIRNTSSISPRGYSSSSTPQQSNYSTSSNSM) form a disordered region. The span at 454 to 479 (SSISPRGYSSSSTPQQSNYSTSSNSM) shows a compositional bias: low complexity.

The protein belongs to the COE family. Forms either a homodimer or a heterodimer with a related family member. Interacts with SIX1.

The protein localises to the nucleus. In terms of biological role, transcription factor that, in osteoblasts, activates the decoy receptor for RANKL, TNFRSF11B, which in turn regulates osteoclast differentiation. Acts in synergy with the Wnt-responsive LEF1/CTNNB1 pathway. Recognizes variations of the palindromic sequence 5'-ATTCCCNNGGGAATT-3'. The sequence is that of Transcription factor COE2 (EBF2) from Homo sapiens (Human).